Consider the following 218-residue polypeptide: Hypoxanthine-guanine phosphoribosyltransferase (218 aa).

Residue Lys-69 coordinates GMP. Lys-103 carries the post-translational modification N6-acetyllysine. Residue Lys-115 forms a Glycyl lysine isopeptide (Lys-Gly) (interchain with G-Cter in SUMO1); alternate linkage. Lys-115 participates in a covalent cross-link: Glycyl lysine isopeptide (Lys-Gly) (interchain with G-Cter in SUMO2); alternate. Residues 134–142, Lys-166, 186–188, and Asp-194 contribute to the GMP site; these read EDIIDTGKT and KFV. The active-site Proton acceptor is the Asp-138. Thr-142 carries the phosphothreonine modification. Asp-194 serves as a coordination point for Mg(2+).

This sequence belongs to the purine/pyrimidine phosphoribosyltransferase family. Homotetramer. It depends on Mg(2+) as a cofactor.

It localises to the cytoplasm. It carries out the reaction IMP + diphosphate = hypoxanthine + 5-phospho-alpha-D-ribose 1-diphosphate. It catalyses the reaction GMP + diphosphate = guanine + 5-phospho-alpha-D-ribose 1-diphosphate. It participates in purine metabolism; IMP biosynthesis via salvage pathway; IMP from hypoxanthine: step 1/1. Converts guanine to guanosine monophosphate, and hypoxanthine to inosine monophosphate. Transfers the 5-phosphoribosyl group from 5-phosphoribosylpyrophosphate onto the purine. Plays a central role in the generation of purine nucleotides through the purine salvage pathway. This chain is Hypoxanthine-guanine phosphoribosyltransferase (Hprt1), found in Rattus norvegicus (Rat).